A 345-amino-acid chain; its full sequence is S-adenosylmethionine:tRNA ribosyltransferase-isomerase (345 aa).

It belongs to the QueA family. Monomer.

The protein resides in the cytoplasm. The catalysed reaction is 7-aminomethyl-7-carbaguanosine(34) in tRNA + S-adenosyl-L-methionine = epoxyqueuosine(34) in tRNA + adenine + L-methionine + 2 H(+). It participates in tRNA modification; tRNA-queuosine biosynthesis. In terms of biological role, transfers and isomerizes the ribose moiety from AdoMet to the 7-aminomethyl group of 7-deazaguanine (preQ1-tRNA) to give epoxyqueuosine (oQ-tRNA). The polypeptide is S-adenosylmethionine:tRNA ribosyltransferase-isomerase (Acinetobacter baumannii (strain ATCC 17978 / DSM 105126 / CIP 53.77 / LMG 1025 / NCDC KC755 / 5377)).